Here is a 540-residue protein sequence, read N- to C-terminus: Chaperonin GroEL 3 (540 aa).

Residues 30–33 (TLGP), Lys-51, 87–91 (DGTTT), Gly-415, 480–482 (NAA), and Asp-496 contribute to the ATP site.

The protein belongs to the chaperonin (HSP60) family. As to quaternary structure, forms a cylinder of 14 subunits composed of two heptameric rings stacked back-to-back. Interacts with the co-chaperonin GroES.

The protein localises to the cytoplasm. The catalysed reaction is ATP + H2O + a folded polypeptide = ADP + phosphate + an unfolded polypeptide.. In terms of biological role, together with its co-chaperonin GroES, plays an essential role in assisting protein folding. The GroEL-GroES system forms a nano-cage that allows encapsulation of the non-native substrate proteins and provides a physical environment optimized to promote and accelerate protein folding. The sequence is that of Chaperonin GroEL 3 from Bradyrhizobium sp. (strain BTAi1 / ATCC BAA-1182).